Reading from the N-terminus, the 981-residue chain is DNA ligase 4 (981 aa).

Residues glutamate 320, lysine 322, arginine 327, glutamate 380, phenylalanine 424, glutamate 484, lysine 489, lysine 506, and lysine 508 each coordinate ATP. The N6-AMP-lysine intermediate role is filled by lysine 322. Glutamate 380 lines the Mg(2+) pocket. Glutamate 484 contacts Mg(2+). The tract at residues 544–563 (SEKNNPSSYESGSDSDSDSE) is disordered. BRCT domains are found at residues 721-819 (SKAD…PKYV) and 875-980 (ERLL…EYAA).

It belongs to the ATP-dependent DNA ligase family. It depends on Mg(2+) as a cofactor.

The protein resides in the nucleus. It catalyses the reaction ATP + (deoxyribonucleotide)n-3'-hydroxyl + 5'-phospho-(deoxyribonucleotide)m = (deoxyribonucleotide)n+m + AMP + diphosphate.. DNA ligase involved in DNA non-homologous end joining (NHEJ); required for double-strand break (DSB) repair. The chain is DNA ligase 4 (LIG4) from Eremothecium gossypii (strain ATCC 10895 / CBS 109.51 / FGSC 9923 / NRRL Y-1056) (Yeast).